The following is a 388-amino-acid chain: Succinyl-diaminopimelate desuccinylase (388 aa).

Residue His72 participates in Zn(2+) binding. The active site involves Asp74. Zn(2+) is bound at residue Asp105. Glu139 serves as the catalytic Proton acceptor. The Zn(2+) site is built by Glu140, Glu168, and His353.

Belongs to the peptidase M20A family. DapE subfamily. Homodimer. Zn(2+) serves as cofactor. It depends on Co(2+) as a cofactor.

It catalyses the reaction N-succinyl-(2S,6S)-2,6-diaminopimelate + H2O = (2S,6S)-2,6-diaminopimelate + succinate. It participates in amino-acid biosynthesis; L-lysine biosynthesis via DAP pathway; LL-2,6-diaminopimelate from (S)-tetrahydrodipicolinate (succinylase route): step 3/3. Functionally, catalyzes the hydrolysis of N-succinyl-L,L-diaminopimelic acid (SDAP), forming succinate and LL-2,6-diaminopimelate (DAP), an intermediate involved in the bacterial biosynthesis of lysine and meso-diaminopimelic acid, an essential component of bacterial cell walls. The polypeptide is Succinyl-diaminopimelate desuccinylase (Orientia tsutsugamushi (strain Boryong) (Rickettsia tsutsugamushi)).